The chain runs to 219 residues: MTDDTAAPPPRGPARDWKSSPLVSGLLLGLFSLVSALMLALASDATRGPIAARSAEDLLASLAQVLPETLHDNDPTADIRTLSDADEGAVRVYVAARGGAVTAVTFELTGYGYGGAIRVLMAVAADGTILGARVLSHTETPGLGDKIEIGKDDWIEGFAGRSLTDPGPAGWKVRRDGGVFDQFSGATITPRAVVGTIHRGLTLFDRHRAELLAPLPPRS.

A helical transmembrane segment spans residues 25-45 (GLLLGLFSLVSALMLALASDA). Thr187 carries the post-translational modification FMN phosphoryl threonine.

This sequence belongs to the RnfG family. The complex is composed of six subunits: RnfA, RnfB, RnfC, RnfD, RnfE and RnfG. Requires FMN as cofactor.

The protein resides in the cellular chromatophore membrane. Its function is as follows. Part of a membrane-bound complex that couples electron transfer with translocation of ions across the membrane. This chain is Ion-translocating oxidoreductase complex subunit G, found in Cereibacter sphaeroides (strain ATCC 17023 / DSM 158 / JCM 6121 / CCUG 31486 / LMG 2827 / NBRC 12203 / NCIMB 8253 / ATH 2.4.1.) (Rhodobacter sphaeroides).